Here is a 630-residue protein sequence, read N- to C-terminus: 1-deoxy-D-xylulose-5-phosphate synthase (630 aa).

Thiamine diphosphate is bound by residues His-72 and 113–115; that span reads GHS. Residue Asp-144 participates in Mg(2+) binding. Thiamine diphosphate-binding positions include 145 to 146, Asn-173, Tyr-284, and Glu-367; that span reads GA. Position 173 (Asn-173) interacts with Mg(2+).

It belongs to the transketolase family. DXPS subfamily. As to quaternary structure, homodimer. Mg(2+) serves as cofactor. Thiamine diphosphate is required as a cofactor.

It catalyses the reaction D-glyceraldehyde 3-phosphate + pyruvate + H(+) = 1-deoxy-D-xylulose 5-phosphate + CO2. The protein operates within metabolic intermediate biosynthesis; 1-deoxy-D-xylulose 5-phosphate biosynthesis; 1-deoxy-D-xylulose 5-phosphate from D-glyceraldehyde 3-phosphate and pyruvate: step 1/1. Functionally, catalyzes the acyloin condensation reaction between C atoms 2 and 3 of pyruvate and glyceraldehyde 3-phosphate to yield 1-deoxy-D-xylulose-5-phosphate (DXP). The polypeptide is 1-deoxy-D-xylulose-5-phosphate synthase (Bacillus cereus (strain AH820)).